The chain runs to 219 residues: Envelope protein US9 homolog (219 aa).

Residues 1 to 193 (MEKAEAAAVV…RHRRRRVALT (193 aa)) are Intravirion-facing. The Di-leucine internalization motif signature appears at 145-146 (LL). The acidic stretch occupies residues 153-168 (DYDSESGCYYSESDNE). Phosphoserine; by host CK2 is present on residues Ser163 and Ser165. Residues 194 to 214 (VAGVILVVVLCAISGIVGAFL) traverse the membrane as a helical; Signal-anchor for type II membrane protein segment. The Virion surface portion of the chain corresponds to 215–219 (ARVFP).

It belongs to the alphaherpesvirinae envelope protein US9 family. In terms of processing, phosphorylated on serines within the acidic cluster. Phosphorylation determines whether endocytosed viral US9 traffics to the trans-Golgi network or recycles to the cell membrane.

The protein localises to the virion membrane. It is found in the host Golgi apparatus membrane. It localises to the host smooth endoplasmic reticulum membrane. Its subcellular location is the host cell membrane. Essential for the anterograde spread of the infection throughout the host nervous system. Together with the gE/gI heterodimer, US9 is involved in the sorting and transport of viral structural components toward axon tips. The polypeptide is Envelope protein US9 homolog (Equine herpesvirus 1 (strain Kentucky A) (EHV-1)).